Reading from the N-terminus, the 565-residue chain is Dihydroxy-acid dehydratase (565 aa).

D80 lines the Mg(2+) pocket. [2Fe-2S] cluster is bound at residue C121. The Mg(2+) site is built by D122 and K123. N6-carboxylysine is present on K123. C194 is a binding site for [2Fe-2S] cluster. Mg(2+) is bound at residue E447. The active-site Proton acceptor is S473.

It belongs to the IlvD/Edd family. Homodimer. It depends on [2Fe-2S] cluster as a cofactor. Mg(2+) is required as a cofactor.

It catalyses the reaction (2R)-2,3-dihydroxy-3-methylbutanoate = 3-methyl-2-oxobutanoate + H2O. It carries out the reaction (2R,3R)-2,3-dihydroxy-3-methylpentanoate = (S)-3-methyl-2-oxopentanoate + H2O. It participates in amino-acid biosynthesis; L-isoleucine biosynthesis; L-isoleucine from 2-oxobutanoate: step 3/4. Its pathway is amino-acid biosynthesis; L-valine biosynthesis; L-valine from pyruvate: step 3/4. Its function is as follows. Functions in the biosynthesis of branched-chain amino acids. Catalyzes the dehydration of (2R,3R)-2,3-dihydroxy-3-methylpentanoate (2,3-dihydroxy-3-methylvalerate) into 2-oxo-3-methylpentanoate (2-oxo-3-methylvalerate) and of (2R)-2,3-dihydroxy-3-methylbutanoate (2,3-dihydroxyisovalerate) into 2-oxo-3-methylbutanoate (2-oxoisovalerate), the penultimate precursor to L-isoleucine and L-valine, respectively. The chain is Dihydroxy-acid dehydratase from Chlorobium phaeovibrioides (strain DSM 265 / 1930) (Prosthecochloris vibrioformis (strain DSM 265)).